A 351-amino-acid chain; its full sequence is MTAIPTISVDAMGGDLGPAAVVEGIGHALKRWPDRKATYLLHGDEALLAPLLARHPKVAAVCELRHTETLVQMTDKPSEAVRRARGSSMWNAIQSVKSGEAGAIVSSGNTGALMAIGKVILRMKKGVHRPAISANWPTPKGHTVVLDVGANVQCNATQLVEFAIMGEAYHRAVFGGEAPSVGLLNVGQEELKGNDTVREADQLIRKANLDIAYQGFIEGNDISAGGIDVVVTDGFTGNIALKTAEGTARLVAGWVRDALTSSLLAKLAAGLLSLGALERLRQRMDPRYINGGVLLGLKGIVVKSHGGADGEGFASALGLAYVMAQSDFMAQIRANLDKFASFEEQEVAAAS.

The protein belongs to the PlsX family. As to quaternary structure, homodimer. Probably interacts with PlsY.

The protein localises to the cytoplasm. It carries out the reaction a fatty acyl-[ACP] + phosphate = an acyl phosphate + holo-[ACP]. Its pathway is lipid metabolism; phospholipid metabolism. Catalyzes the reversible formation of acyl-phosphate (acyl-PO(4)) from acyl-[acyl-carrier-protein] (acyl-ACP). This enzyme utilizes acyl-ACP as fatty acyl donor, but not acyl-CoA. The chain is Phosphate acyltransferase from Maricaulis maris (strain MCS10) (Caulobacter maris).